Consider the following 467-residue polypeptide: UDP-N-acetylmuramate--L-alanine ligase (467 aa).

An ATP-binding site is contributed by 114 to 120 (GTHGKTT).

It belongs to the MurCDEF family.

It is found in the cytoplasm. It carries out the reaction UDP-N-acetyl-alpha-D-muramate + L-alanine + ATP = UDP-N-acetyl-alpha-D-muramoyl-L-alanine + ADP + phosphate + H(+). The protein operates within cell wall biogenesis; peptidoglycan biosynthesis. In terms of biological role, cell wall formation. This chain is UDP-N-acetylmuramate--L-alanine ligase, found in Rhodopseudomonas palustris (strain BisB5).